A 341-amino-acid chain; its full sequence is HTH-type transcriptional repressor PurR (341 aa).

The HTH lacI-type domain occupies 2 to 56 (ATIKDVAKRANVSTTTVSHVINKTRFVAEETRNAVWAAIKELHYSPSAVARSLKV). A DNA-binding region (H-T-H motif) is located at residues 4 to 23 (IKDVAKRANVSTTTVSHVIN). A DNA-binding region spans residues 48–56 (SAVARSLKV). Residues tyrosine 73, arginine 190, threonine 192, phenylalanine 221, and aspartate 275 each coordinate hypoxanthine.

In terms of assembly, homodimer.

The protein operates within purine metabolism; purine nucleotide biosynthesis [regulation]. Its function is as follows. Is the main repressor of the genes involved in the de novo synthesis of purine nucleotides, regulating purB, purC, purEK, purF, purHD, purL, purMN and guaBA expression. PurR is allosterically activated to bind its cognate DNA by binding the purine corepressors, hypoxanthine or guanine, thereby effecting transcription repression. This Shigella dysenteriae serotype 1 (strain Sd197) protein is HTH-type transcriptional repressor PurR.